The chain runs to 116 residues: Large ribosomal subunit protein uL18 (116 aa).

This sequence belongs to the universal ribosomal protein uL18 family. Part of the 50S ribosomal subunit; part of the 5S rRNA/L5/L18/L25 subcomplex. Contacts the 5S and 23S rRNAs.

In terms of biological role, this is one of the proteins that bind and probably mediate the attachment of the 5S RNA into the large ribosomal subunit, where it forms part of the central protuberance. In Saccharophagus degradans (strain 2-40 / ATCC 43961 / DSM 17024), this protein is Large ribosomal subunit protein uL18.